The sequence spans 465 residues: CUGBP Elav-like family member 3 (465 aa).

RRM domains follow at residues 7-88 (IKLF…PADS) and 95-175 (RKLF…FADT). Pro residues predominate over residues 346–359 (PPALVAQQPPPPPQ). Residues 346–379 (PPALVAQQPPPPPQQQQQQQQQQQQQQQREGPDG) are disordered. A compositionally biased stretch (low complexity) spans 360–373 (QQQQQQQQQQQQQQ). The RRM 3 domain maps to 380–458 (CNIFIYHLPQ…KRLKVQLKRP (79 aa)).

The protein belongs to the CELF/BRUNOL family. As to expression, expressed in brain.

The protein localises to the nucleus. It is found in the cytoplasm. RNA-binding protein involved in the regulation of pre-mRNA alternative splicing. Mediates exon inclusion and/or exclusion in pre-mRNA that are subject to tissue-specific and developmentally regulated alternative splicing. Specifically activates exon 5 inclusion of cardiac isoforms of TNNT2 during heart remodeling at the juvenile to adult transition. Activates the splicing of MAPT/Tau exon 10. Binds to muscle-specific splicing enhancer (MSE) intronic sites flanking the alternative exon 5 of TNNT2 pre-mRNA. This chain is CUGBP Elav-like family member 3 (CELF3), found in Homo sapiens (Human).